The sequence spans 552 residues: CTP synthase (552 aa).

Residues 1–270 (MTKYVFVTGG…DRIICEELKL (270 aa)) form an amidoligase domain region. Residue Ser-13 coordinates CTP. Ser-13 lines the UTP pocket. Residues 14-19 (SLGKGI) and Asp-71 each bind ATP. Mg(2+) is bound by residues Asp-71 and Glu-144. CTP is bound by residues 151–153 (DIE), 191–196 (KTKPTQ), and Lys-227. UTP-binding positions include 191–196 (KTKPTQ) and Lys-227. Residues 295–547 (TIGMVGKYVD…VEAALANKQA (253 aa)) form the Glutamine amidotransferase type-1 domain. Gly-356 contributes to the L-glutamine binding site. Cys-383 serves as the catalytic Nucleophile; for glutamine hydrolysis. L-glutamine-binding positions include 384 to 387 (LGMQ), Glu-407, and Arg-473. Active-site residues include His-520 and Glu-522.

This sequence belongs to the CTP synthase family. Homotetramer.

It catalyses the reaction UTP + L-glutamine + ATP + H2O = CTP + L-glutamate + ADP + phosphate + 2 H(+). It carries out the reaction L-glutamine + H2O = L-glutamate + NH4(+). The enzyme catalyses UTP + NH4(+) + ATP = CTP + ADP + phosphate + 2 H(+). Its pathway is pyrimidine metabolism; CTP biosynthesis via de novo pathway; CTP from UDP: step 2/2. With respect to regulation, allosterically activated by GTP, when glutamine is the substrate; GTP has no effect on the reaction when ammonia is the substrate. The allosteric effector GTP functions by stabilizing the protein conformation that binds the tetrahedral intermediate(s) formed during glutamine hydrolysis. Inhibited by the product CTP, via allosteric rather than competitive inhibition. Its function is as follows. Catalyzes the ATP-dependent amination of UTP to CTP with either L-glutamine or ammonia as the source of nitrogen. Regulates intracellular CTP levels through interactions with the four ribonucleotide triphosphates. This is CTP synthase from Burkholderia cenocepacia (strain HI2424).